A 419-amino-acid chain; its full sequence is UDP-N-acetylglucosamine 1-carboxyvinyltransferase 2 (419 aa).

Residue 22 to 23 coordinates phosphoenolpyruvate; that stretch reads KN. Residue Arg92 participates in UDP-N-acetyl-alpha-D-glucosamine binding. Asp116 serves as the catalytic Proton donor. UDP-N-acetyl-alpha-D-glucosamine-binding positions include 121 to 125, Asp306, and Leu328; that span reads RPIDQ.

This sequence belongs to the EPSP synthase family. MurA subfamily.

The protein localises to the cytoplasm. It carries out the reaction phosphoenolpyruvate + UDP-N-acetyl-alpha-D-glucosamine = UDP-N-acetyl-3-O-(1-carboxyvinyl)-alpha-D-glucosamine + phosphate. The protein operates within cell wall biogenesis; peptidoglycan biosynthesis. Its function is as follows. Cell wall formation. Adds enolpyruvyl to UDP-N-acetylglucosamine. This Latilactobacillus sakei subsp. sakei (strain 23K) (Lactobacillus sakei subsp. sakei) protein is UDP-N-acetylglucosamine 1-carboxyvinyltransferase 2.